Reading from the N-terminus, the 38-residue chain is SITNEQILDAIADMSVMQVVELIEAMEEKFGVSAAAAV.

It belongs to the bacterial ribosomal protein bL12 family. In terms of assembly, homodimer. Part of the ribosomal stalk of the 50S ribosomal subunit. Forms a multimeric L10(L12)X complex, where L10 forms an elongated spine to which 2 to 4 L12 dimers bind in a sequential fashion. Binds GTP-bound translation factors.

Its function is as follows. Forms part of the ribosomal stalk which helps the ribosome interact with GTP-bound translation factors. Is thus essential for accurate translation. The protein is Large ribosomal subunit protein bL12 (rplL) of Salinivibrio costicola (Vibrio costicola).